Consider the following 169-residue polypeptide: S-ribosylhomocysteine lyase (169 aa).

Residues His54, His58, and Cys128 each coordinate Fe cation.

The protein belongs to the LuxS family. Homodimer. It depends on Fe cation as a cofactor.

It catalyses the reaction S-(5-deoxy-D-ribos-5-yl)-L-homocysteine = (S)-4,5-dihydroxypentane-2,3-dione + L-homocysteine. Involved in the synthesis of autoinducer 2 (AI-2) which is secreted by bacteria and is used to communicate both the cell density and the metabolic potential of the environment. The regulation of gene expression in response to changes in cell density is called quorum sensing. Catalyzes the transformation of S-ribosylhomocysteine (RHC) to homocysteine (HC) and 4,5-dihydroxy-2,3-pentadione (DPD). The polypeptide is S-ribosylhomocysteine lyase (Shewanella woodyi (strain ATCC 51908 / MS32)).